We begin with the raw amino-acid sequence, 771 residues long: Caldesmon (771 aa).

Disordered stretches follow at residues 23-91 (ERLS…ALLE) and 104-599 (LQEA…FSPK). The myosin and calmodulin-binding stretch occupies residues 26-199 (SYQRNDDDEE…PKEVPTEENQ (174 aa)). At Tyr27 the chain carries Phosphotyrosine. 9 stretches are compositionally biased toward basic and acidic residues: residues 47–67 (QERL…EKSE), 104–115 (LQEALERQKEFD), 139–155 (ITGK…RCEI), 170–194 (WRQD…KEVP), 203–215 (AVEK…EVVE), 240–435 (AADK…ESLP), 442–484 (SKKD…RELT), 509–518 (GSEKLKEKQQ), and 525–592 (DELK…EKKP). Repeat copies occupy residues 251 to 265 (EREK…RLKA), 266 to 278 (EEEK…KQKA), 279 to 291 (EEEK…RERA), 294 to 306 (EEEK…RERA), 309 to 321 (EEER…RERA), 324 to 336 (EEER…RAKA), 337 to 349 (EEER…RAKA), 350 to 362 (EEER…RAKA), 363 to 375 (EKER…RERA), and 378 to 390 (EEEK…KARL). Residues 251-390 (EREKLEAEEK…KRAAEEKARL (140 aa)) are 10 X 13 AA approximate tandem repeats. Positions 523 to 580 (ELDELKKRREERRKILEEEEQKKKQEEAERKIREEEEKKRMKEEIERRRAEAAEKRQK) are tropomyosin-binding. A Phosphoserine; by CDK1 modification is found at Ser597. Positions 612 to 644 (LNKSAQKSGMKPAHTTAVVSKIDSRLEQYTSAV) are strong actin-binding. The segment at 622–632 (KPAHTTAVVSK) is tropomyosin-binding. At Tyr640 the chain carries Phosphotyrosine. Residues 674 to 680 (WEKGNVF) form a calmodulin-binding region. Residues 676-771 (KGNVFSSPGG…NGLRQFEKEP (96 aa)) form a disordered region. Residues 679 to 691 (VFSSPGGTGTPNK) show a composition bias toward polar residues. Ser682 carries the post-translational modification Phosphoserine; by CDK1. A phosphothreonine; by CDK1 mark is found at Thr688 and Thr711. Ser717 is subject to Phosphoserine; by CDK1. Residues 723–742 (SDLRPGDVSGKRNLWEKQSV) show a composition bias toward basic and acidic residues. The segment at 726-752 (RPGDVSGKRNLWEKQSVEKPAASSSKV) is weak actin-binding.

The protein belongs to the caldesmon family. In terms of processing, phosphorylated in non-muscle cells. Phosphorylation by CDK1 during mitosis causes caldesmon to dissociate from microfilaments. Phosphorylation reduces caldesmon binding to actin, myosin, and calmodulin as well as its inhibition of actomyosin ATPase activity. Phosphorylation also occurs in both quiescent and dividing smooth muscle cells with similar effects on the interaction with actin and calmodulin and on microfilaments reorganization. High-molecular-weight caldesmon (h-caldesmon) is predominantly expressed in smooth muscles, whereas low-molecular-weight caldesmon (l-caldesmon) is widely distributed in non-muscle tissues and cells. Not expressed in skeletal muscle or heart.

It is found in the cytoplasm. Its subcellular location is the cytoskeleton. The protein localises to the myofibril. The protein resides in the stress fiber. In terms of biological role, actin- and myosin-binding protein implicated in the regulation of actomyosin interactions in smooth muscle and nonmuscle cells (could act as a bridge between myosin and actin filaments). Stimulates actin binding of tropomyosin which increases the stabilization of actin filament structure. In muscle tissues, inhibits the actomyosin ATPase by binding to F-actin. This inhibition is attenuated by calcium-calmodulin and is potentiated by tropomyosin. Interacts with actin, myosin, two molecules of tropomyosin and with calmodulin. Also plays an essential role during cellular mitosis and receptor capping. This is Caldesmon (CALD1) from Gallus gallus (Chicken).